The chain runs to 231 residues: WAP four-disulfide core domain protein 3 (231 aa).

Residues 1–24 (MMLSCLFLLKALLALGSLESWITA) form the signal peptide. WAP domains follow at residues 26-68 (EHAK…CRDI), 69-114 (PKGR…VVPI), 119-162 (LAEF…LGDI), and 163-207 (EGGR…VPPV). 16 disulfides stabilise this stretch: Cys-33/Cys-57, Cys-40/Cys-61, Cys-44/Cys-56, Cys-50/Cys-65, Cys-76/Cys-102, Cys-85/Cys-106, Cys-89/Cys-101, Cys-95/Cys-110, Cys-126/Cys-150, Cys-133/Cys-154, Cys-137/Cys-149, Cys-143/Cys-158, Cys-170/Cys-195, Cys-178/Cys-199, Cys-182/Cys-194, and Cys-188/Cys-203. An N-linked (GlcNAc...) asparagine glycan is attached at Asn-107. Residue Asn-217 is glycosylated (N-linked (GlcNAc...) asparagine).

As to expression, ubiquitously expressed.

It localises to the secreted. The chain is WAP four-disulfide core domain protein 3 (WFDC3) from Homo sapiens (Human).